The chain runs to 708 residues: RUN and FYVE domain-containing protein 1 (708 aa).

Basic and acidic residues predominate over residues 1-17 (MADREGGCAAGRGRELE). Residues 1-57 (MADREGGCAAGRGRELEPELEPGPGPGSALEPGEEFEIVDRSQLPGPGDLRSATRPR) are disordered. One can recognise an RUN domain in the interval 139–271 (DADHAPLQQF…LDANLCLKGE (133 aa)). The stretch at 321 to 374 (TVGDLQTKIDGLEKTNSKLQEELSAATDRICSLQEEQQQLREQNELIRERSEKS) forms a coiled coil. Phosphotyrosine is present on residues Tyr-389 and Tyr-400. Positions 405–617 (KQLKEEKKVR…QALQEMGLHL (213 aa)) form a coiled coil. A disordered region spans residues 493–522 (QVMSSMKQMEERLQHSERARQGAEERSHKL). Basic and acidic residues predominate over residues 500–522 (QMEERLQHSERARQGAEERSHKL). Residues 615–625 (LHLSQSKLKME) form an interaction with RAB4 region. Residue Ser-620 is modified to Phosphoserine. The FYVE-type zinc finger occupies 642-700 (DDEATHCRQCEKEFSISRRKHHCRNCGHIFCNTCSSNELALPSYPKPVRVCDSCHTLLL). 8 residues coordinate Zn(2+): Cys-648, Cys-651, Cys-664, Cys-667, Cys-672, Cys-675, Cys-692, and Cys-695.

Self-assembles through coiled coil domains to drive ELVA (endo-lysosomal vesicular assembly) formation. Interacts with BMX. May interact with SSB. Interacts with RAB4 and RAB5 that have been activated by GTP-binding. Interacts WITH RAB14 and RAB4B (GTP-bound form); the interactions allow endosomal tethering and fusion. Interacts with ARL8B (GTP-bound form); the interaction is required for RUFY1 endosomal location and promotes interaction with RAB14. In terms of processing, phosphorylation on Tyr-389 and/or Tyr-400 is required for interaction with BMX and endosomal targeting. As to expression, broadly expressed, with highest levels in lung, testis, kidney and brain.

It is found in the early endosome membrane. Activating adapter involved in cargo sorting from early/recycling endosomes. Regulates retrieval of proteins from endosomes to the trans-Golgi network through interaction with the dynein-dynactin complex. Dual effector of RAB4B and RAB14, mediates a cooperative interaction allowing endosomal tethering and fusion. Binds phospholipid vesicles containing phosphatidylinositol 3-phosphate and participates in early endosomal trafficking. In oocytes, self-assembles to form a protein matrix which hold together endolysosomes, autophagosomes and proteasomes and generate non-membrane-bound compartments called endo-lysosomal vesicular assemblies (ELVAs). In immature oocytes, ELVAs sequester ubiquitinated protein aggregates and degrade them upon oocyte maturation. The sequence is that of RUN and FYVE domain-containing protein 1 from Homo sapiens (Human).